Here is a 622-residue protein sequence, read N- to C-terminus: Sodium-dependent serotonin transporter (622 aa).

Residues 1 to 53 (MDRSGSSDFAGAAATTGRSNPAPWSDDKESPNNEDDSNEDDGDHTTPAKVTDP) are disordered. Residues 1–82 (MDRSGSSDFA…TRETWGQKAE (82 aa)) are Cytoplasmic-facing. A compositionally biased stretch (acidic residues) spans 32–42 (NNEDDSNEDDG). 3 helical membrane-spanning segments follow: residues 83–103 (FLLAVIGFAVDLGNVWRFPYI), 111–130 (AFLVPYCLFLIFGGLPLFYM), and 155–175 (GVGYAICLIDIYMGMYYNTII). Na(+) is bound by residues Gly89, Ala91, Val92, and Asn96. The Extracellular portion of the chain corresponds to 176-244 (GWAVYYLFAS…NGLDFMGPVK (69 aa)). Residues Cys195 and Cys204 are joined by a disulfide bond. N-linked (GlcNAc...) asparagine glycosylation is present at Asn211. A run of 5 helical transmembrane segments spans residues 245 to 263 (PTLALCVFGVFVLVYFSLW), 272 to 289 (VVWVTALAPYVVLIILLV), 325 to 342 (IFFSLGPGFGTLLALSSY), 354 to 375 (LITSSINCLTSFLAGFVIFSVL), and 408 to 427 (MSGSVFWSIIFFLMLITLGL). Na(+) is bound by residues Ser328, Asn360, Leu425, Asp428, and Ser429. A run of 4 helical transmembrane segments spans residues 455 to 473 (LFVLLLLAFIFLCALPTMT), 489 to 509 (GLAILFVVFVEAAGVFWFYGV), 530 to 549 (ICWTYISPVFLLTIFIFSIM), and 568 to 586 (VGWAVTCSSVLCIPMYIIY). The Cytoplasmic portion of the chain corresponds to 587–622 (KFFFASKGGCRQRLQESFQPEDNCGSVVPGQQGTSV).

Belongs to the sodium:neurotransmitter symporter (SNF) (TC 2.A.22) family. In terms of tissue distribution, expression is specific to cell bodies in the ventral ganglion of the embryonic and larval nervous system.

It localises to the cell membrane. Terminates the action of serotonin by its high affinity sodium-dependent reuptake into presynaptic terminals. The protein is Sodium-dependent serotonin transporter (SerT) of Drosophila melanogaster (Fruit fly).